Consider the following 377-residue polypeptide: Alanine racemase, catabolic (377 aa).

The Proton acceptor; specific for D-alanine role is filled by Lys51. Lys51 is subject to N6-(pyridoxal phosphate)lysine. Residue Arg150 participates in substrate binding. Tyr272 serves as the catalytic Proton acceptor; specific for L-alanine. Met320 contacts substrate.

The protein belongs to the alanine racemase family. It depends on pyridoxal 5'-phosphate as a cofactor.

It catalyses the reaction L-alanine = D-alanine. Isomerizes L-alanine to D-alanine which is then oxidized to pyruvate by DadA. This Rhizobium johnstonii (strain DSM 114642 / LMG 32736 / 3841) (Rhizobium leguminosarum bv. viciae) protein is Alanine racemase, catabolic (dadX).